We begin with the raw amino-acid sequence, 528 residues long: GMP synthase [glutamine-hydrolyzing] (528 aa).

In terms of domain architecture, Glutamine amidotransferase type-1 spans 13 to 204 (SILILDFGSQ…VYGISSCVAD (192 aa)). The active-site Nucleophile is the cysteine 90. Residues histidine 178 and glutamate 180 contribute to the active site. One can recognise a GMPS ATP-PPase domain in the interval 205-403 (WTTETYIEET…LGLPDEIIKR (199 aa)). 232 to 238 (SGGVDSS) contributes to the ATP binding site.

In terms of assembly, homodimer.

It catalyses the reaction XMP + L-glutamine + ATP + H2O = GMP + L-glutamate + AMP + diphosphate + 2 H(+). It participates in purine metabolism; GMP biosynthesis; GMP from XMP (L-Gln route): step 1/1. In terms of biological role, catalyzes the synthesis of GMP from XMP. This is GMP synthase [glutamine-hydrolyzing] from Prochlorococcus marinus (strain MIT 9312).